Consider the following 360-residue polypeptide: UDP-N-acetylglucosamine--N-acetylmuramyl-(pentapeptide) pyrophosphoryl-undecaprenol N-acetylglucosamine transferase (360 aa).

UDP-N-acetyl-alpha-D-glucosamine is bound by residues T13–G15, R164, S192, and Q293.

Belongs to the glycosyltransferase 28 family. MurG subfamily.

The protein resides in the cell inner membrane. The catalysed reaction is di-trans,octa-cis-undecaprenyl diphospho-N-acetyl-alpha-D-muramoyl-L-alanyl-D-glutamyl-meso-2,6-diaminopimeloyl-D-alanyl-D-alanine + UDP-N-acetyl-alpha-D-glucosamine = di-trans,octa-cis-undecaprenyl diphospho-[N-acetyl-alpha-D-glucosaminyl-(1-&gt;4)]-N-acetyl-alpha-D-muramoyl-L-alanyl-D-glutamyl-meso-2,6-diaminopimeloyl-D-alanyl-D-alanine + UDP + H(+). Its pathway is cell wall biogenesis; peptidoglycan biosynthesis. In terms of biological role, cell wall formation. Catalyzes the transfer of a GlcNAc subunit on undecaprenyl-pyrophosphoryl-MurNAc-pentapeptide (lipid intermediate I) to form undecaprenyl-pyrophosphoryl-MurNAc-(pentapeptide)GlcNAc (lipid intermediate II). The protein is UDP-N-acetylglucosamine--N-acetylmuramyl-(pentapeptide) pyrophosphoryl-undecaprenol N-acetylglucosamine transferase of Chromobacterium violaceum (strain ATCC 12472 / DSM 30191 / JCM 1249 / CCUG 213 / NBRC 12614 / NCIMB 9131 / NCTC 9757 / MK).